We begin with the raw amino-acid sequence, 284 residues long: Acetylglutamate kinase (284 aa).

Substrate-binding positions include 54-55, Arg76, and Asn179; that span reads GG.

Belongs to the acetylglutamate kinase family. ArgB subfamily.

Its subcellular location is the cytoplasm. The catalysed reaction is N-acetyl-L-glutamate + ATP = N-acetyl-L-glutamyl 5-phosphate + ADP. Its pathway is amino-acid biosynthesis; L-arginine biosynthesis; N(2)-acetyl-L-ornithine from L-glutamate: step 2/4. Catalyzes the ATP-dependent phosphorylation of N-acetyl-L-glutamate. This chain is Acetylglutamate kinase, found in Sorangium cellulosum (strain So ce56) (Polyangium cellulosum (strain So ce56)).